Reading from the N-terminus, the 282-residue chain is Cell division protein FtsQ (282 aa).

The Cytoplasmic portion of the chain corresponds to 1 to 30 (MINIGPPKKRRLRRKGNRFKKTRRVIPWRR). Residues 31-51 (LMIGALWGTMALASLGMVVAV) form a helical membrane-spanning segment. Residues 52–282 (ACFAGQMLFA…LDAGELRGKG (231 aa)) lie on the Periplasmic side of the membrane. Positions 65-133 (FKVERIQVEN…DQLVIRVDER (69 aa)) constitute a POTRA domain.

The protein belongs to the FtsQ/DivIB family. FtsQ subfamily.

The protein resides in the cell inner membrane. Functionally, essential cell division protein. In Syntrophotalea carbinolica (strain DSM 2380 / NBRC 103641 / GraBd1) (Pelobacter carbinolicus), this protein is Cell division protein FtsQ.